Consider the following 852-residue polypeptide: Protein SBE22 (852 aa).

The disordered stretch occupies residues 1-158 (MTSIQERGTS…ADKSKINTFP (158 aa)). Residues 15-26 (SLKEGEASDRSS) are compositionally biased toward basic and acidic residues. Over residues 43 to 61 (PPSQTTLGRSRAGSNTMNK) the composition is skewed to polar residues. Serine 72 bears the Phosphoserine mark. Polar residues predominate over residues 74–96 (NLLSNMNCSDNGNGGNMLNSFVN). Low complexity predominate over residues 124–139 (TTEVFSSTSASSSLGD). Position 201 is a phosphoserine (serine 201). The interval 206-248 (AAEKTMNKSRHSYQEQFSSKKSQSSLLNSKQRSRAKSQTCSST) is disordered. The span at 224–235 (SKKSQSSLLNSK) shows a compositional bias: low complexity. A phosphoserine mark is found at serine 459, serine 517, and serine 520.

This sequence belongs to the SBE2 family.

The protein resides in the cytoplasm. It localises to the golgi apparatus. Its function is as follows. With SBE2, is involved in cell wall integrity and polarity processes like bud growth, through the transport of CHS3 and UTR2 to sites of growth. This is Protein SBE22 (SBE22) from Saccharomyces cerevisiae (strain YJM789) (Baker's yeast).